A 253-amino-acid polypeptide reads, in one-letter code: DNA polymerase sliding clamp (253 aa).

It belongs to the PCNA family. Homotrimer. The subunits circularize to form a toroid; DNA passes through its center. Replication factor C (RFC) is required to load the toroid on the DNA.

Functionally, sliding clamp subunit that acts as a moving platform for DNA processing. Responsible for tethering the catalytic subunit of DNA polymerase and other proteins to DNA during high-speed replication. The sequence is that of DNA polymerase sliding clamp from Methanopyrus kandleri (strain AV19 / DSM 6324 / JCM 9639 / NBRC 100938).